The chain runs to 247 residues: Large ribosomal subunit protein uL30 (247 aa).

Position 1 is an N-acetylmethionine (methionine 1). A run of 4 repeats spans residues lysine 7–leucine 17, lysine 18–isoleucine 29, lysine 30–leucine 41, and arginine 42–alanine 53. The 4 X 12 AA tandem repeats stretch occupies residues lysine 7–alanine 53. Threonine 16 carries the post-translational modification Phosphothreonine. Position 123 is an N6-acetyllysine (lysine 123). N6-succinyllysine is present on lysine 126. At tyrosine 138 the chain carries Phosphotyrosine.

The protein belongs to the universal ribosomal protein uL30 family. In terms of assembly, component of the large ribosomal subunit. Homodimer. Interacts with DHX33.

The protein localises to the cytoplasm. In terms of biological role, component of the large ribosomal subunit. The ribosome is a large ribonucleoprotein complex responsible for the synthesis of proteins in the cell. Binds to G-rich structures in 28S rRNA and in mRNAs. Plays a regulatory role in the translation apparatus; inhibits cell-free translation of mRNAs. This chain is Large ribosomal subunit protein uL30 (RPL7), found in Pongo abelii (Sumatran orangutan).